The sequence spans 158 residues: 2-C-methyl-D-erythritol 2,4-cyclodiphosphate synthase (158 aa).

A divalent metal cation is bound by residues Asp-10 and His-12. 4-CDP-2-C-methyl-D-erythritol 2-phosphate is bound by residues 10 to 12 (DVH) and 36 to 37 (HS). Residue His-44 participates in a divalent metal cation binding. 4-CDP-2-C-methyl-D-erythritol 2-phosphate contacts are provided by residues 58 to 60 (DIG), 63 to 67 (FSDTD), and Arg-144.

It belongs to the IspF family. Homotrimer. It depends on a divalent metal cation as a cofactor.

The enzyme catalyses 4-CDP-2-C-methyl-D-erythritol 2-phosphate = 2-C-methyl-D-erythritol 2,4-cyclic diphosphate + CMP. The protein operates within isoprenoid biosynthesis; isopentenyl diphosphate biosynthesis via DXP pathway; isopentenyl diphosphate from 1-deoxy-D-xylulose 5-phosphate: step 4/6. Functionally, involved in the biosynthesis of isopentenyl diphosphate (IPP) and dimethylallyl diphosphate (DMAPP), two major building blocks of isoprenoid compounds. Catalyzes the conversion of 4-diphosphocytidyl-2-C-methyl-D-erythritol 2-phosphate (CDP-ME2P) to 2-C-methyl-D-erythritol 2,4-cyclodiphosphate (ME-CPP) with a corresponding release of cytidine 5-monophosphate (CMP). The sequence is that of 2-C-methyl-D-erythritol 2,4-cyclodiphosphate synthase from Burkholderia vietnamiensis (strain G4 / LMG 22486) (Burkholderia cepacia (strain R1808)).